A 433-amino-acid chain; its full sequence is Staphylopine synthase (433 aa).

NADP(+)-binding positions include 9 to 12 (TGPV), Arg33, 37 to 40 (SEKS), and Asp99. His216 functions as the Proton donor/acceptor in the catalytic mechanism.

The protein belongs to the staphylopine dehydrogenase family. As to quaternary structure, homodimer.

The catalysed reaction is staphylopine + NADP(+) + H2O = (2S)-2-amino-4-{[(1R)-1-carboxy-2-(1H-imidazol-4-yl)ethyl]amino}butanoate + pyruvate + NADPH + H(+). Its function is as follows. Catalyzes the NADPH-dependent reductive condensation of pyruvate to the intermediate formed by the adjacently encoded enzyme CntL, namely (2S)-2-amino-4-{[(1R)-1-carboxy-2-(1H-imidazol-4-yl)ethyl]amino}butanoate, leading to the production of staphylopine. This is the last step in the biosynthesis of the metallophore staphylopine, which is involved in the acquisition of nickel, cobalt, zinc, copper, and iron, and thus enables bacterial growth inside the host, where metal access is limited. Therefore, this enzyme probably contributes to staphylococcal virulence. Can use neither NADH nor alpha-ketoglutarate in place of NADPH and pyruvate, respectively. The polypeptide is Staphylopine synthase (Staphylococcus aureus (strain Mu50 / ATCC 700699)).